The chain runs to 108 residues: PTS system cellobiose-specific EIIB component (108 aa).

Residues 3–108 (DKVIALACAA…VLAAAENLMN (106 aa)) form the PTS EIIB type-3 domain. Cysteine 10 acts as the Phosphocysteine intermediate in catalysis. Cysteine 10 is modified (phosphocysteine; by EIIA).

It catalyses the reaction D-cellobiose(out) + N(pros)-phospho-L-histidyl-[protein] = 6-phospho-beta-D-glucosyl-(1-&gt;4)-D-glucose(in) + L-histidyl-[protein]. Its function is as follows. The phosphoenolpyruvate-dependent sugar phosphotransferase system (sugar PTS), a major carbohydrate active transport system, catalyzes the phosphorylation of incoming sugar substrates concomitantly with their translocation across the cell membrane. Involved in cellobiose transport with PtcA and CelB. This system can also transport lactose. The protein is PTS system cellobiose-specific EIIB component of Lactococcus lactis subsp. lactis (strain IL1403) (Streptococcus lactis).